The chain runs to 585 residues: Serine protease HtrA-like (585 aa).

The segment at methionine 1–threonine 184 is disordered. A compositionally biased stretch (basic and acidic residues) spans tyrosine 21–tyrosine 82. The span at glutamine 84 to asparagine 94 shows a compositional bias: polar residues. Basic and acidic residues predominate over residues lysine 95 to valine 113. The segment covering serine 114–asparagine 124 has biased composition (polar residues). Positions serine 126–glutamine 139 are enriched in basic and acidic residues. A compositionally biased stretch (polar residues) spans glycine 151–glutamine 175. A helical transmembrane segment spans residues methionine 224–valine 244. Residues histidine 320, aspartate 350, and serine 435 each act as charge relay system in the active site. A PDZ domain is found at glycine 516 to glycine 575.

It belongs to the peptidase S1C family.

It is found in the cell membrane. The sequence is that of Serine protease HtrA-like from Staphylococcus epidermidis (strain ATCC 35984 / DSM 28319 / BCRC 17069 / CCUG 31568 / BM 3577 / RP62A).